We begin with the raw amino-acid sequence, 421 residues long: Mannose-1-phosphate guanyltransferase alpha-A (421 aa).

This sequence belongs to the transferase hexapeptide repeat family.

It carries out the reaction alpha-D-mannose 1-phosphate + GTP + H(+) = GDP-alpha-D-mannose + diphosphate. Its pathway is nucleotide-sugar biosynthesis; GDP-alpha-D-mannose biosynthesis; GDP-alpha-D-mannose from alpha-D-mannose 1-phosphate (GTP route): step 1/1. This is Mannose-1-phosphate guanyltransferase alpha-A (gmppa-a) from Xenopus laevis (African clawed frog).